We begin with the raw amino-acid sequence, 659 residues long: DNA ligase (659 aa).

NAD(+) contacts are provided by residues 32 to 36, 81 to 82, and glutamate 111; these read DFEYD and SL. The active-site N6-AMP-lysine intermediate is lysine 113. NAD(+) contacts are provided by arginine 134, glutamate 168, lysine 280, and lysine 304. Positions 398, 401, 416, and 421 each coordinate Zn(2+). The 71-residue stretch at 585 to 655 folds into the BRCT domain; that stretch reads ETNSIYFQKR…KELNIPIINE (71 aa).

This sequence belongs to the NAD-dependent DNA ligase family. LigA subfamily. It depends on Mg(2+) as a cofactor. Mn(2+) is required as a cofactor.

The enzyme catalyses NAD(+) + (deoxyribonucleotide)n-3'-hydroxyl + 5'-phospho-(deoxyribonucleotide)m = (deoxyribonucleotide)n+m + AMP + beta-nicotinamide D-nucleotide.. DNA ligase that catalyzes the formation of phosphodiester linkages between 5'-phosphoryl and 3'-hydroxyl groups in double-stranded DNA using NAD as a coenzyme and as the energy source for the reaction. It is essential for DNA replication and repair of damaged DNA. The polypeptide is DNA ligase (Mycoplasma genitalium (strain ATCC 33530 / DSM 19775 / NCTC 10195 / G37) (Mycoplasmoides genitalium)).